A 733-amino-acid polypeptide reads, in one-letter code: Wall-associated receptor kinase 5 (733 aa).

The N-terminal stretch at 1-23 (MKVHSLFLMAIFFYLAYTQLVKA) is a signal peptide. Residues 24 to 330 (QPRDDCQTRC…IDTPKEEPKY (307 aa)) are Extracellular-facing. N-linked (GlcNAc...) asparagine glycans are attached at residues Asn-57, Asn-77, Asn-110, Asn-137, Asn-184, Asn-206, Asn-218, Asn-232, and Asn-247. Residues 231 to 278 (GNQTCEQVVGRNICGGNSTCFDSTRGKGYNCKCLQGFDGNPYLSDGCQ) form the EGF-like 1 domain. Cystine bridges form between Cys-235–Cys-250, Cys-244–Cys-261, Cys-263–Cys-277, Cys-283–Cys-296, Cys-290–Cys-305, and Cys-307–Cys-320. The 43-residue stretch at 279–321 (DINECTTRIHNCSDTSTCENTLGSFHCQCPSGSDLNTTTMSCI) folds into the EGF-like 2; calcium-binding domain. Asn-289 carries an N-linked (GlcNAc...) asparagine glycan. Asn-314 carries an N-linked (GlcNAc...) asparagine glycan. A helical membrane pass occupies residues 331 to 351 (LGWTTVLLGTTIGFLIILLTI). At 352 to 733 (SYIQQKMRHR…VTRLDIETGR (382 aa)) the chain is on the cytoplasmic side. Thr-397 carries the post-translational modification Phosphothreonine. The 284-residue stretch at 408-691 (YNESRILGQG…RVKTTKHQWS (284 aa)) folds into the Protein kinase domain. Residues 414-422 (LGQGGQGTV) and Lys-436 each bind ATP. Tyr-481 is modified (phosphotyrosine). Asp-533 (proton acceptor) is an active-site residue. Phosphothreonine is present on residues Thr-567 and Thr-572. The residue at position 580 (Tyr-580) is a Phosphotyrosine.

This sequence belongs to the protein kinase superfamily. Ser/Thr protein kinase family. In terms of tissue distribution, predominantly expressed in green tissues such as stems and leaves.

It is found in the membrane. It catalyses the reaction L-seryl-[protein] + ATP = O-phospho-L-seryl-[protein] + ADP + H(+). The enzyme catalyses L-threonyl-[protein] + ATP = O-phospho-L-threonyl-[protein] + ADP + H(+). Functionally, serine/threonine-protein kinase that may function as a signaling receptor of extracellular matrix component. Binding to pectin may have significance in the control of cell expansion, morphogenesis and development. The chain is Wall-associated receptor kinase 5 (WAK5) from Arabidopsis thaliana (Mouse-ear cress).